Reading from the N-terminus, the 303-residue chain is Sulfate adenylyltransferase subunit 2 (303 aa).

It belongs to the PAPS reductase family. CysD subfamily. Heterodimer composed of CysD, the smaller subunit, and CysN.

It carries out the reaction sulfate + ATP + H(+) = adenosine 5'-phosphosulfate + diphosphate. It participates in sulfur metabolism; hydrogen sulfide biosynthesis; sulfite from sulfate: step 1/3. In terms of biological role, with CysN forms the ATP sulfurylase (ATPS) that catalyzes the adenylation of sulfate producing adenosine 5'-phosphosulfate (APS) and diphosphate, the first enzymatic step in sulfur assimilation pathway. APS synthesis involves the formation of a high-energy phosphoric-sulfuric acid anhydride bond driven by GTP hydrolysis by CysN coupled to ATP hydrolysis by CysD. This Akkermansia muciniphila (strain ATCC BAA-835 / DSM 22959 / JCM 33894 / BCRC 81048 / CCUG 64013 / CIP 107961 / Muc) protein is Sulfate adenylyltransferase subunit 2.